Reading from the N-terminus, the 305-residue chain is tRNA dimethylallyltransferase (305 aa).

8 to 15 contributes to the ATP binding site; that stretch reads GPTGTGKS. 10–15 is a binding site for substrate; it reads TGTGKS.

The protein belongs to the IPP transferase family. As to quaternary structure, monomer. Mg(2+) is required as a cofactor.

The catalysed reaction is adenosine(37) in tRNA + dimethylallyl diphosphate = N(6)-dimethylallyladenosine(37) in tRNA + diphosphate. Functionally, catalyzes the transfer of a dimethylallyl group onto the adenine at position 37 in tRNAs that read codons beginning with uridine, leading to the formation of N6-(dimethylallyl)adenosine (i(6)A). This is tRNA dimethylallyltransferase from Mycobacterium sp. (strain KMS).